The sequence spans 433 residues: O-methyltransferase aclM (433 aa).

A coiled-coil region spans residues 5–37 (LTDAERTALQTSLEALNRQVEATRNILRSNSQK). Residues Asp-277 and 311–313 (GDF) contribute to the S-adenosyl-L-methionine site. The active-site Proton acceptor is the His-330.

This sequence belongs to the class I-like SAM-binding methyltransferase superfamily. Cation-independent O-methyltransferase family. COMT subfamily.

Its pathway is mycotoxin biosynthesis. In terms of biological role, O-methyltransferase; part of the gene cluster that mediates the biosynthesis of aspirochlorine (or antibiotic A30641), an unusual halogenated spiro compound with distinctive antifungal properties due to selective inhibition of protein biosynthesis, and which is also active against bacteria, viruses, and murine tumor cells. The non-ribosomal peptide synthetase (NRPS) aclP is responsible the formation of the diketopiperazine (DKP) core from the condensation of 2 phenylalanine residues. One Phe residue is tailored into chlorotyrosine by hydroxylation and chlorination, whereas the second Phe undergoes an unprecedented C-C bond cleavage to be converted into glycine. After formation of the DKP, sulfur is incorporated into the DKP by conjugation with glutathione by aclG, followed by its stepwise degradation to the thiol by aclI, aclJ and aclK, and the dithiol oxidation by aclT. In addition, oxygenases (aclB, aclC, aclL and aclO) and O-methyltransferases (aclM and aclU) act as tailoring enzymes to produce the intermediate dechloroaspirochlorine. Ultimately, chlorination of dechloroaspirochlorine by the halogenase aclH is the last step in the aspirochlorine pathway. This chain is O-methyltransferase aclM, found in Aspergillus oryzae (strain ATCC 42149 / RIB 40) (Yellow koji mold).